The following is a 130-amino-acid chain: Small ribosomal subunit protein uS9 (130 aa).

Residues 109 to 130 (RMKERKKYGLKAARRAPQFSKR) form a disordered region. Residues 111–130 (KERKKYGLKAARRAPQFSKR) are compositionally biased toward basic residues.

This sequence belongs to the universal ribosomal protein uS9 family.

The polypeptide is Small ribosomal subunit protein uS9 (Lachnoclostridium phytofermentans (strain ATCC 700394 / DSM 18823 / ISDg) (Clostridium phytofermentans)).